Here is a 623-residue protein sequence, read N- to C-terminus: Aspartate--tRNA(Asp/Asn) ligase (623 aa).

Glu175 lines the L-aspartate pocket. An aspartate region spans residues 199-202; that stretch reads QQFK. Residues Arg221 and His455 each coordinate L-aspartate. 221 to 223 is a binding site for ATP; sequence RDE. ATP is bound at residue Glu517. An L-aspartate-binding site is contributed by Arg524. An ATP-binding site is contributed by 569–572; the sequence is GVDR.

The protein belongs to the class-II aminoacyl-tRNA synthetase family. Type 1 subfamily. As to quaternary structure, homodimer.

Its subcellular location is the cytoplasm. The enzyme catalyses tRNA(Asx) + L-aspartate + ATP = L-aspartyl-tRNA(Asx) + AMP + diphosphate. Aspartyl-tRNA synthetase with relaxed tRNA specificity since it is able to aspartylate not only its cognate tRNA(Asp) but also tRNA(Asn). Reaction proceeds in two steps: L-aspartate is first activated by ATP to form Asp-AMP and then transferred to the acceptor end of tRNA(Asp/Asn). This is Aspartate--tRNA(Asp/Asn) ligase from Methylocella silvestris (strain DSM 15510 / CIP 108128 / LMG 27833 / NCIMB 13906 / BL2).